A 389-amino-acid polypeptide reads, in one-letter code: 8-amino-7-oxononanoate synthase (389 aa).

Residue R31 coordinates substrate. Residue 109 to 110 (GY) participates in pyridoxal 5'-phosphate binding. A substrate-binding site is contributed by H134. Residues S180, 205–208 (DEAH), and 236–239 (TLSK) each bind pyridoxal 5'-phosphate. At K239 the chain carries N6-(pyridoxal phosphate)lysine. A substrate-binding site is contributed by T349.

Belongs to the class-II pyridoxal-phosphate-dependent aminotransferase family. BioF subfamily. In terms of assembly, homodimer. Pyridoxal 5'-phosphate serves as cofactor.

It carries out the reaction 6-carboxyhexanoyl-[ACP] + L-alanine + H(+) = (8S)-8-amino-7-oxononanoate + holo-[ACP] + CO2. It participates in cofactor biosynthesis; biotin biosynthesis. Its function is as follows. Catalyzes the decarboxylative condensation of pimeloyl-[acyl-carrier protein] and L-alanine to produce 8-amino-7-oxononanoate (AON), [acyl-carrier protein], and carbon dioxide. The protein is 8-amino-7-oxononanoate synthase of Mycobacterium marinum (strain ATCC BAA-535 / M).